We begin with the raw amino-acid sequence, 218 residues long: Pyridoxine/pyridoxamine 5'-phosphate oxidase (218 aa).

Residues 14–17 (RREY) and lysine 72 contribute to the substrate site. FMN is bound by residues 67–72 (RIVLLK), 82–83 (YT), arginine 88, lysine 89, and glutamine 111. 3 residues coordinate substrate: tyrosine 129, arginine 133, and serine 137. FMN is bound by residues 146–147 (QS) and tryptophan 191. 197–199 (RLH) contacts substrate. Residue arginine 201 participates in FMN binding.

The protein belongs to the pyridoxamine 5'-phosphate oxidase family. In terms of assembly, homodimer. FMN is required as a cofactor.

The catalysed reaction is pyridoxamine 5'-phosphate + O2 + H2O = pyridoxal 5'-phosphate + H2O2 + NH4(+). It carries out the reaction pyridoxine 5'-phosphate + O2 = pyridoxal 5'-phosphate + H2O2. The protein operates within cofactor metabolism; pyridoxal 5'-phosphate salvage; pyridoxal 5'-phosphate from pyridoxamine 5'-phosphate: step 1/1. It participates in cofactor metabolism; pyridoxal 5'-phosphate salvage; pyridoxal 5'-phosphate from pyridoxine 5'-phosphate: step 1/1. Functionally, catalyzes the oxidation of either pyridoxine 5'-phosphate (PNP) or pyridoxamine 5'-phosphate (PMP) into pyridoxal 5'-phosphate (PLP). This chain is Pyridoxine/pyridoxamine 5'-phosphate oxidase, found in Enterobacter sp. (strain 638).